The sequence spans 500 residues: Glutamate--tRNA ligase (500 aa).

Residues 12–22 (PSPTGHLHIGN) carry the 'HIGH' region motif. The 'KMSKS' region motif lies at 259–263 (KLSKR). An ATP-binding site is contributed by Lys262.

Belongs to the class-I aminoacyl-tRNA synthetase family. Glutamate--tRNA ligase type 1 subfamily. As to quaternary structure, monomer.

It is found in the cytoplasm. It carries out the reaction tRNA(Glu) + L-glutamate + ATP = L-glutamyl-tRNA(Glu) + AMP + diphosphate. Its function is as follows. Catalyzes the attachment of glutamate to tRNA(Glu) in a two-step reaction: glutamate is first activated by ATP to form Glu-AMP and then transferred to the acceptor end of tRNA(Glu). This chain is Glutamate--tRNA ligase, found in Lactobacillus delbrueckii subsp. bulgaricus (strain ATCC BAA-365 / Lb-18).